A 1031-amino-acid chain; its full sequence is Error-prone DNA polymerase (1031 aa).

This sequence belongs to the DNA polymerase type-C family. DnaE2 subfamily.

The protein localises to the cytoplasm. The enzyme catalyses DNA(n) + a 2'-deoxyribonucleoside 5'-triphosphate = DNA(n+1) + diphosphate. Functionally, DNA polymerase involved in damage-induced mutagenesis and translesion synthesis (TLS). It is not the major replicative DNA polymerase. The sequence is that of Error-prone DNA polymerase from Pseudomonas syringae pv. tomato (strain ATCC BAA-871 / DC3000).